The following is a 233-amino-acid chain: DNA repair protein RecO (233 aa).

Belongs to the RecO family.

Its function is as follows. Involved in DNA repair and RecF pathway recombination. In Psychromonas ingrahamii (strain DSM 17664 / CCUG 51855 / 37), this protein is DNA repair protein RecO.